Consider the following 440-residue polypeptide: MTCRPALSDSHPPEPGTPSSPSFGVCGDRPLLRERGQHEVFCGLAGIIWLHRKIQDAFFLIIGSRTCAHLMQSAAGVMIFAEPRFATAVLEEQDLAGLADAQDEIDRVVARLLERRPDIRLLFLVGSCPSEVIKIDLQRAALRLSKVHGARTRVVSYSGSGLETTFTQGEDACLAALVPDLPSAAADEAPDLLVVGTLPDVVEDQFGRLFAEMGIARTAFLPPRRSTALPAIGPKTRFLLAQPFLGDTARCLEARGARRLAAPFPFGVEGTTGWLAAAAQAFGVDDLTFRRVTAPGRERAARALERQRATLEGKRVFFFPESQLEIPLARFLVRELGMEAIEIGTPYLHRAHLAEELALLPATALLSEGQDVDRQLDRCRAARPDLVVCGLGLANPLEAEGITTKWSIELVFSPIHGYEQAGDLAELFARPLLRRALLKV.

Residues 1-24 form a disordered region; it reads MTCRPALSDSHPPEPGTPSSPSFG. Cys-42, Cys-67, and Cys-128 together coordinate [4Fe-4S] cluster.

It belongs to the BchN/ChlN family. As to quaternary structure, protochlorophyllide reductase is composed of three subunits; BchL, BchN and BchB. Forms a heterotetramer of two BchB and two BchN subunits. The cofactor is [4Fe-4S] cluster.

The catalysed reaction is chlorophyllide a + oxidized 2[4Fe-4S]-[ferredoxin] + 2 ADP + 2 phosphate = protochlorophyllide a + reduced 2[4Fe-4S]-[ferredoxin] + 2 ATP + 2 H2O. It functions in the pathway porphyrin-containing compound metabolism; bacteriochlorophyll biosynthesis (light-independent). Functionally, component of the dark-operative protochlorophyllide reductase (DPOR) that uses Mg-ATP and reduced ferredoxin to reduce ring D of protochlorophyllide (Pchlide) to form chlorophyllide a (Chlide). This reaction is light-independent. The NB-protein (BchN-BchB) is the catalytic component of the complex. This Rhodospirillum rubrum (strain ATCC 11170 / ATH 1.1.1 / DSM 467 / LMG 4362 / NCIMB 8255 / S1) protein is Light-independent protochlorophyllide reductase subunit N.